A 381-amino-acid polypeptide reads, in one-letter code: Heterogeneous nuclear rnp K-like protein 2 (381 aa).

Residues 1 to 34 (MSQFFEAATPVAIPTNNTNGGSSDAGSAATGGAP) form a disordered region. Residues 15–33 (TNNTNGGSSDAGSAATGGA) are compositionally biased toward low complexity. 3 consecutive KH domains span residues 43–107 (TINH…IGDI), 156–221 (IGYV…LIEI), and 258–326 (NTRI…ESML). Positions 344 to 381 (LEAAEGDATVVTERSDSASFLEEKEEPQKNHDNKEEQS) are disordered. Phosphoserine occurs at positions 358, 360, and 362. Over residues 369 to 381 (EPQKNHDNKEEQS) the composition is skewed to basic and acidic residues.

Belongs to the HEK2 family. Binds RNA. Phosphorylated by the plasma membrane-Anchored casein kinase YCK1. Phosphorylation at its C-terminus reduces its RNA-binding capacity.

It localises to the cytoplasm. The protein localises to the P-body. The protein resides in the nucleus. Its subcellular location is the chromosome. It is found in the telomere. In terms of biological role, RNA-binding protein involved in the correct localization of transcripts in the cell. RNA localization is a widespread mechanism for achieving localized protein synthesis. Required for the asymmetric localization to the daughter cell nucleus of the ASH1 transcript, coding for a specific repressor of transcription. Overexpression inhibits translation of the ASH1 transcript. Involved in the stability of transcripts, like the MTL1 mRNA. Involved in structural and functional organization of telomeric chromatin and regulates silencing at the HMR locus. In Saccharomyces cerevisiae (strain JAY291) (Baker's yeast), this protein is Heterogeneous nuclear rnp K-like protein 2 (HEK2).